The sequence spans 70 residues: Cold shock-like protein CspH (70 aa).

Positions 7–67 (GIVKTFDRKS…GLRGPTAANV (61 aa)) constitute a CSD domain.

Its subcellular location is the cytoplasm. This chain is Cold shock-like protein CspH (cspH), found in Escherichia coli O6:H1 (strain CFT073 / ATCC 700928 / UPEC).